Here is a 346-residue protein sequence, read N- to C-terminus: DNA-directed RNA polymerase subunit alpha (346 aa).

The tract at residues 1–243 (MTMNNPNLTM…EQLSIWVNFE (243 aa)) is alpha N-terminal domain (alpha-NTD). The alpha C-terminal domain (alpha-CTD) stretch occupies residues 260–346 (LNENLFRSVE…ERWKAQQAQA (87 aa)).

The protein belongs to the RNA polymerase alpha chain family. Homodimer. The RNAP catalytic core consists of 2 alpha, 1 beta, 1 beta' and 1 omega subunit. When a sigma factor is associated with the core the holoenzyme is formed, which can initiate transcription.

It carries out the reaction RNA(n) + a ribonucleoside 5'-triphosphate = RNA(n+1) + diphosphate. Its function is as follows. DNA-dependent RNA polymerase catalyzes the transcription of DNA into RNA using the four ribonucleoside triphosphates as substrates. In Sorangium cellulosum (strain So ce56) (Polyangium cellulosum (strain So ce56)), this protein is DNA-directed RNA polymerase subunit alpha.